Consider the following 387-residue polypeptide: Alpha-maltose-1-phosphate synthase (387 aa).

Belongs to the glycosyltransferase group 1 family.

It carries out the reaction ADP-alpha-D-glucose + alpha-D-glucose 1-phosphate = alpha-maltose 1-phosphate + ADP + H(+). Its pathway is capsule biogenesis; capsule polysaccharide biosynthesis. It functions in the pathway glycan biosynthesis; glycogen biosynthesis. Involved in the biosynthesis of the maltose-1-phosphate (M1P) building block required for alpha-glucan production by the key enzyme GlgE. Catalyzes the formation of an alpha-1,4 linkage between glucose from ADP-glucose and glucose 1-phosphate (G1P) to yield maltose-1-phosphate (M1P). The polypeptide is Alpha-maltose-1-phosphate synthase (Mycobacterium tuberculosis (strain CDC 1551 / Oshkosh)).